The sequence spans 436 residues: tRNA(Ile)-lysidine synthase (436 aa).

ATP is bound at residue 25–30; sequence SGGLDS.

This sequence belongs to the tRNA(Ile)-lysidine synthase family.

It is found in the cytoplasm. It catalyses the reaction cytidine(34) in tRNA(Ile2) + L-lysine + ATP = lysidine(34) in tRNA(Ile2) + AMP + diphosphate + H(+). Ligates lysine onto the cytidine present at position 34 of the AUA codon-specific tRNA(Ile) that contains the anticodon CAU, in an ATP-dependent manner. Cytidine is converted to lysidine, thus changing the amino acid specificity of the tRNA from methionine to isoleucine. This Serratia proteamaculans (strain 568) protein is tRNA(Ile)-lysidine synthase.